Reading from the N-terminus, the 481-residue chain is Protein nucleotidyltransferase YdiU (481 aa).

Positions 85, 87, 88, 108, 120, 121, 171, and 178 each coordinate ATP. The active-site Proton acceptor is aspartate 248. Mg(2+)-binding residues include asparagine 249 and aspartate 258. Aspartate 258 contributes to the ATP binding site. The disordered stretch occupies residues 458 to 481 (HPGLAEFQQPPTPEQKGLQLSCSS).

Belongs to the SELO family. Mg(2+) is required as a cofactor. Mn(2+) serves as cofactor.

The catalysed reaction is L-seryl-[protein] + ATP = 3-O-(5'-adenylyl)-L-seryl-[protein] + diphosphate. The enzyme catalyses L-threonyl-[protein] + ATP = 3-O-(5'-adenylyl)-L-threonyl-[protein] + diphosphate. It carries out the reaction L-tyrosyl-[protein] + ATP = O-(5'-adenylyl)-L-tyrosyl-[protein] + diphosphate. It catalyses the reaction L-histidyl-[protein] + UTP = N(tele)-(5'-uridylyl)-L-histidyl-[protein] + diphosphate. The catalysed reaction is L-seryl-[protein] + UTP = O-(5'-uridylyl)-L-seryl-[protein] + diphosphate. The enzyme catalyses L-tyrosyl-[protein] + UTP = O-(5'-uridylyl)-L-tyrosyl-[protein] + diphosphate. In terms of biological role, nucleotidyltransferase involved in the post-translational modification of proteins. It can catalyze the addition of adenosine monophosphate (AMP) or uridine monophosphate (UMP) to a protein, resulting in modifications known as AMPylation and UMPylation. This Hydrogenovibrio crunogenus (strain DSM 25203 / XCL-2) (Thiomicrospira crunogena) protein is Protein nucleotidyltransferase YdiU.